Reading from the N-terminus, the 355-residue chain is Tetraacyldisaccharide 4'-kinase (355 aa).

64 to 71 lines the ATP pocket; the sequence is YVGGTGKT. Positions 206–226 are disordered; that stretch reads NRAPQSSATPTAASGQGPRRA. The span at 208-222 shows a compositional bias: low complexity; it reads APQSSATPTAASGQG.

It belongs to the LpxK family.

It carries out the reaction a lipid A disaccharide + ATP = a lipid IVA + ADP + H(+). It functions in the pathway glycolipid biosynthesis; lipid IV(A) biosynthesis; lipid IV(A) from (3R)-3-hydroxytetradecanoyl-[acyl-carrier-protein] and UDP-N-acetyl-alpha-D-glucosamine: step 6/6. Functionally, transfers the gamma-phosphate of ATP to the 4'-position of a tetraacyldisaccharide 1-phosphate intermediate (termed DS-1-P) to form tetraacyldisaccharide 1,4'-bis-phosphate (lipid IVA). This Bordetella petrii (strain ATCC BAA-461 / DSM 12804 / CCUG 43448) protein is Tetraacyldisaccharide 4'-kinase.